Here is a 474-residue protein sequence, read N- to C-terminus: 3-isopropylmalate dehydratase large subunit (474 aa).

[4Fe-4S] cluster-binding residues include cysteine 352, cysteine 413, and cysteine 416.

Belongs to the aconitase/IPM isomerase family. LeuC type 1 subfamily. In terms of assembly, heterodimer of LeuC and LeuD. [4Fe-4S] cluster is required as a cofactor.

It carries out the reaction (2R,3S)-3-isopropylmalate = (2S)-2-isopropylmalate. The protein operates within amino-acid biosynthesis; L-leucine biosynthesis; L-leucine from 3-methyl-2-oxobutanoate: step 2/4. Its function is as follows. Catalyzes the isomerization between 2-isopropylmalate and 3-isopropylmalate, via the formation of 2-isopropylmaleate. The protein is 3-isopropylmalate dehydratase large subunit of Pseudomonas syringae pv. syringae (strain B728a).